We begin with the raw amino-acid sequence, 631 residues long: uncharacterized protein (631 aa).

A run of 9 helical transmembrane segments spans residues 42–62, 76–96, 106–128, 152–172, 344–364, 366–386, 398–418, 429–449, and 464–484; these read VLVG…IGGF, ALKL…GTLL, VLGL…GPAP, AGLT…GWLW, ALKY…FGFA, SYWI…VFTL, IGVI…YIAF, MLIV…ALVI, and IARL…TMLL.

The protein belongs to the YccS/YhfK family.

It localises to the cell membrane. This is an uncharacterized protein from Bacillus subtilis (strain 168).